Reading from the N-terminus, the 471-residue chain is Heat shock 70 kDa protein 13 (471 aa).

Residues 1–22 form the signal peptide; it reads MAREMTILGSAVLTLLLAGYLA. Positions 315 to 341 are enriched in basic and acidic residues; it reads EQDRKEPHSSDTELPKDKLSSADDHRV. The segment at 315-352 is disordered; it reads EQDRKEPHSSDTELPKDKLSSADDHRVNSGFGRGLSDK.

Belongs to the heat shock protein 70 family. In terms of assembly, binds UBQLN2. In terms of tissue distribution, constitutively expressed in all tissues.

The protein resides in the microsome. It localises to the endoplasmic reticulum. Its function is as follows. Has peptide-independent ATPase activity. This Homo sapiens (Human) protein is Heat shock 70 kDa protein 13 (HSPA13).